The sequence spans 215 residues: MDVIVGGGKYGVEAARFLEKRSRDYVIIDRNPECLAMRELDLVRVDSIEEVKEGRYFLKGGIEILPSLLKFKPEYIFPTAPLHVAAEALRLKFDLKPWNEVLDCIIGNLPARVVVSAGRGSVVVSYNRDADCLEKCSAPDICPVTKIKKPCPMHDLVKFAYPDAFVLISRQLEPGLGAISGEELAKLMKQAEKREKIVVATACRCHGVITALKRA.

This is an uncharacterized protein from Archaeoglobus fulgidus (strain ATCC 49558 / DSM 4304 / JCM 9628 / NBRC 100126 / VC-16).